A 625-amino-acid chain; its full sequence is Probable potassium transport system protein Kup 1 (625 aa).

12 helical membrane passes run Leu-14–Leu-34, Ala-50–Val-70, Ile-104–Ala-124, Pro-139–Ile-159, Leu-170–Ile-190, Gly-213–Leu-233, Trp-249–Ile-269, Leu-287–Ile-307, Ile-339–Phe-359, Ala-368–Met-388, Leu-396–Ala-416, and Ile-421–Ile-441.

The protein belongs to the HAK/KUP transporter (TC 2.A.72) family.

The protein resides in the cell inner membrane. The enzyme catalyses K(+)(in) + H(+)(in) = K(+)(out) + H(+)(out). Its function is as follows. Transport of potassium into the cell. Likely operates as a K(+):H(+) symporter. The chain is Probable potassium transport system protein Kup 1 from Bradyrhizobium sp. (strain ORS 278).